The following is a 454-amino-acid chain: Tubulin alpha chain (454 aa).

Residues Gln-12, Asp-72, Ser-141, Gly-145, Thr-146, Thr-180, Asn-207, and Asn-229 each coordinate GTP. Asp-72 contacts Mg(2+). Glu-255 is an active-site residue.

Belongs to the tubulin family. As to quaternary structure, dimer of alpha and beta chains. A typical microtubule is a hollow water-filled tube with an outer diameter of 25 nm and an inner diameter of 15 nM. Alpha-beta heterodimers associate head-to-tail to form protofilaments running lengthwise along the microtubule wall with the beta-tubulin subunit facing the microtubule plus end conferring a structural polarity. Microtubules usually have 13 protofilaments but different protofilament numbers can be found in some organisms and specialized cells. The cofactor is Mg(2+).

The protein localises to the cytoplasm. Its subcellular location is the cytoskeleton. It catalyses the reaction GTP + H2O = GDP + phosphate + H(+). Its function is as follows. Tubulin is the major constituent of microtubules, a cylinder consisting of laterally associated linear protofilaments composed of alpha- and beta-tubulin heterodimers. Microtubules grow by the addition of GTP-tubulin dimers to the microtubule end, where a stabilizing cap forms. Below the cap, tubulin dimers are in GDP-bound state, owing to GTPase activity of alpha-tubulin. The protein is Tubulin alpha chain (TUB1) of Colletotrichum orbiculare (strain 104-T / ATCC 96160 / CBS 514.97 / LARS 414 / MAFF 240422) (Cucumber anthracnose fungus).